The primary structure comprises 238 residues: Cell division protein A (238 aa).

Interacts with CdvB.

It is found in the cytoplasm. The protein resides in the nucleoid. Its subcellular location is the cell membrane. In terms of biological role, part of a cell division machinery. The CdvA, CdvB and CdvC proteins polymerize between segregating nucleoids and persist throughout cell division, forming a successively smaller structure during constriction. CdvA is a membrane interacting protein that recruits ESCRT-III homologs to the membrane. This Sulfolobus acidocaldarius (strain ATCC 33909 / DSM 639 / JCM 8929 / NBRC 15157 / NCIMB 11770) protein is Cell division protein A.